Reading from the N-terminus, the 591-residue chain is Metalloendopeptidase OPG085 (591 aa).

His41 lines the Zn(2+) pocket. Residue Glu44 is part of the active site. Positions 45 and 112 each coordinate Zn(2+).

The protein belongs to the peptidase M44 family. Zn(2+) is required as a cofactor. In terms of processing, undergoes proteolytic processing during the course of infection. May be cleaved into 46 kDa and 22 kDa products (Potential).

Its subcellular location is the virion. In terms of biological role, probably involved in maturation of some viral proteins by processing them preferentially at Ala-Gly-|-Ser/Thr/Lys motifs. Does not seem to be responsible for the cleavage of major core proteins. The polypeptide is Metalloendopeptidase OPG085 (OPG085) (Variola virus (isolate Human/India/Ind3/1967) (VARV)).